We begin with the raw amino-acid sequence, 243 residues long: Adenosylcobinamide-GDP ribazoletransferase (243 aa).

The next 5 membrane-spanning stretches (helical) occupy residues 31–51 (LLFY…LNIA), 57–77 (LLLH…ALHL), 109–129 (IAVV…LALI), 135–155 (MALI…FLTT), and 188–208 (LVIA…VFIW).

The protein belongs to the CobS family. Requires Mg(2+) as cofactor.

It localises to the cell inner membrane. It catalyses the reaction alpha-ribazole + adenosylcob(III)inamide-GDP = adenosylcob(III)alamin + GMP + H(+). The catalysed reaction is alpha-ribazole 5'-phosphate + adenosylcob(III)inamide-GDP = adenosylcob(III)alamin 5'-phosphate + GMP + H(+). The protein operates within cofactor biosynthesis; adenosylcobalamin biosynthesis; adenosylcobalamin from cob(II)yrinate a,c-diamide: step 7/7. Its function is as follows. Joins adenosylcobinamide-GDP and alpha-ribazole to generate adenosylcobalamin (Ado-cobalamin). Also synthesizes adenosylcobalamin 5'-phosphate from adenosylcobinamide-GDP and alpha-ribazole 5'-phosphate. This Pseudomonas fluorescens (strain Pf0-1) protein is Adenosylcobinamide-GDP ribazoletransferase.